The sequence spans 1122 residues: Transcription-repair-coupling factor (1122 aa).

In terms of domain architecture, Helicase ATP-binding spans 593-758 (DLRNGMLMDR…MTGLKELSII (166 aa)). 606 to 613 (GDVGFGKT) is an ATP binding site. The DEEQ box motif lies at 711 to 714 (DEEQ). A Helicase C-terminal domain is found at 779–933 (IIRDALLREH…GFTIASRDMD (155 aa)).

The protein in the N-terminal section; belongs to the UvrB family. In the C-terminal section; belongs to the helicase family. RecG subfamily.

It localises to the cytoplasm. Functionally, couples transcription and DNA repair by recognizing RNA polymerase (RNAP) stalled at DNA lesions. Mediates ATP-dependent release of RNAP and its truncated transcript from the DNA, and recruitment of nucleotide excision repair machinery to the damaged site. This Rickettsia conorii (strain ATCC VR-613 / Malish 7) protein is Transcription-repair-coupling factor.